The chain runs to 554 residues: Exodeoxyribonuclease 7 large subunit (554 aa).

This sequence belongs to the XseA family. Heterooligomer composed of large and small subunits.

The protein localises to the cytoplasm. The catalysed reaction is Exonucleolytic cleavage in either 5'- to 3'- or 3'- to 5'-direction to yield nucleoside 5'-phosphates.. In terms of biological role, bidirectionally degrades single-stranded DNA into large acid-insoluble oligonucleotides, which are then degraded further into small acid-soluble oligonucleotides. The protein is Exodeoxyribonuclease 7 large subunit of Chlamydia pneumoniae (Chlamydophila pneumoniae).